The sequence spans 23 residues: Unknown protein 1 (23 aa).

This chain is Unknown protein 1, found in Coniferiporia sulphurascens (Laminated root rot fungus).